A 217-amino-acid chain; its full sequence is DNA repair protein homolog YobH (217 aa).

Residues 1-68 form the UmuC domain; sequence MAKAIQSSMW…RPLSKMWGIG (68 aa).

It belongs to the DNA polymerase type-Y family.

The sequence is that of DNA repair protein homolog YobH (yobH) from Bacillus subtilis (strain 168).